The chain runs to 122 residues: Large ribosomal subunit protein uL14 (122 aa).

Belongs to the universal ribosomal protein uL14 family. As to quaternary structure, part of the 50S ribosomal subunit. Forms a cluster with proteins L3 and L19. In the 70S ribosome, L14 and L19 interact and together make contacts with the 16S rRNA in bridges B5 and B8.

Binds to 23S rRNA. Forms part of two intersubunit bridges in the 70S ribosome. The chain is Large ribosomal subunit protein uL14 from Geobacter sulfurreducens (strain ATCC 51573 / DSM 12127 / PCA).